Here is a 533-residue protein sequence, read N- to C-terminus: Beta-1,2-xylosyltransferase RCN11 (533 aa).

Residues 1 to 23 (MMPVRTYHHHHHHNNSNNHRLRR) are Cytoplasmic-facing. A helical; Signal-anchor for type II membrane protein membrane pass occupies residues 24 to 44 (IIPRVLLAVFAIYAVSFAAYL). Topologically, residues 45-533 (LRHQSPHPHP…LSNILKGFGC (489 aa)) are lumenal. The segment at 51 to 78 (HPHPHPAADPERDAVDAAGGGGGGGAVD) is disordered. Residues 56-65 (PAADPERDAV) are compositionally biased toward basic and acidic residues. 2 N-linked (GlcNAc...) asparagine glycosylation sites follow: Asn307 and Asn313.

Belongs to the glycosyltransferase 61 family. As to expression, expressed at the base of the crown roots and in the basal region of the shoot, which contains the shoot and axillary meristems.

It is found in the golgi apparatus membrane. Its pathway is glycan metabolism. Glycosyltransferase involved in the xylosylation of N-glycans. Possesses beta-1,2-xylosyltransferase activity, transferring xylose from UDP-xylose to the core beta-linked mannose of N-glycans. Beta-1,2-linked xylose residues on N-glycans are critical for seed germination and plant development and growth under conditions of abiotic stress. This Oryza sativa subsp. japonica (Rice) protein is Beta-1,2-xylosyltransferase RCN11.